We begin with the raw amino-acid sequence, 218 residues long: Deoxyribose-phosphate aldolase (218 aa).

Catalysis depends on Asp-92, which acts as the Proton donor/acceptor. Lys-156 functions as the Schiff-base intermediate with acetaldehyde in the catalytic mechanism. The active-site Proton donor/acceptor is Lys-185.

The protein belongs to the DeoC/FbaB aldolase family. DeoC type 1 subfamily.

It localises to the cytoplasm. The enzyme catalyses 2-deoxy-D-ribose 5-phosphate = D-glyceraldehyde 3-phosphate + acetaldehyde. The protein operates within carbohydrate degradation; 2-deoxy-D-ribose 1-phosphate degradation; D-glyceraldehyde 3-phosphate and acetaldehyde from 2-deoxy-alpha-D-ribose 1-phosphate: step 2/2. Functionally, catalyzes a reversible aldol reaction between acetaldehyde and D-glyceraldehyde 3-phosphate to generate 2-deoxy-D-ribose 5-phosphate. The protein is Deoxyribose-phosphate aldolase of Desulfitobacterium hafniense (strain Y51).